A 38-amino-acid chain; its full sequence is Beta-galactosidase (38 aa).

Belongs to the glycosyl hydrolase 35 family. Heterodimer of a large and a small subunit. In terms of processing, the small subunit is N-glycosylated.

It carries out the reaction Hydrolysis of terminal non-reducing beta-D-galactose residues in beta-D-galactosides.. Involved in cell wall degradation. Degrades polysaccharides containing beta-(1--&gt;4)-linked galactans, acting as an exo-(1--&gt;4)-beta-D-galactanase. The chain is Beta-galactosidase from Hordeum vulgare (Barley).